Consider the following 449-residue polypeptide: UDP-N-acetylmuramoylalanine--D-glutamate ligase (449 aa).

Position 118–124 (118–124 (GTNGKTT)) interacts with ATP.

The protein belongs to the MurCDEF family.

It localises to the cytoplasm. The enzyme catalyses UDP-N-acetyl-alpha-D-muramoyl-L-alanine + D-glutamate + ATP = UDP-N-acetyl-alpha-D-muramoyl-L-alanyl-D-glutamate + ADP + phosphate + H(+). It participates in cell wall biogenesis; peptidoglycan biosynthesis. Functionally, cell wall formation. Catalyzes the addition of glutamate to the nucleotide precursor UDP-N-acetylmuramoyl-L-alanine (UMA). The chain is UDP-N-acetylmuramoylalanine--D-glutamate ligase from Staphylococcus epidermidis (strain ATCC 35984 / DSM 28319 / BCRC 17069 / CCUG 31568 / BM 3577 / RP62A).